Consider the following 179-residue polypeptide: Large ribosomal subunit protein uL5 (179 aa).

Belongs to the universal ribosomal protein uL5 family. In terms of assembly, part of the 50S ribosomal subunit; part of the 5S rRNA/L5/L18/L25 subcomplex. Contacts the 5S rRNA and the P site tRNA. Forms a bridge to the 30S subunit in the 70S ribosome.

In terms of biological role, this is one of the proteins that bind and probably mediate the attachment of the 5S RNA into the large ribosomal subunit, where it forms part of the central protuberance. In the 70S ribosome it contacts protein S13 of the 30S subunit (bridge B1b), connecting the 2 subunits; this bridge is implicated in subunit movement. Contacts the P site tRNA; the 5S rRNA and some of its associated proteins might help stabilize positioning of ribosome-bound tRNAs. This Burkholderia mallei (strain ATCC 23344) protein is Large ribosomal subunit protein uL5.